The chain runs to 772 residues: 5-methyltetrahydropteroyltriglutamate--homocysteine methyltransferase (772 aa).

Residues 24 to 27 (RELK) and Lys120 contribute to the 5-methyltetrahydropteroyltri-L-glutamate site. Residues 446 to 448 (IGS) and Glu499 each bind L-homocysteine. L-methionine contacts are provided by residues 446–448 (IGS) and Glu499. 5-methyltetrahydropteroyltri-L-glutamate is bound at residue Trp576. Asp614 lines the L-homocysteine pocket. Asp614 lines the L-methionine pocket. Glu620 lines the 5-methyltetrahydropteroyltri-L-glutamate pocket. Zn(2+)-binding residues include His656, Cys658, and Glu680. Catalysis depends on His709, which acts as the Proton donor. Cys741 serves as a coordination point for Zn(2+).

Belongs to the vitamin-B12 independent methionine synthase family. Zn(2+) is required as a cofactor.

The enzyme catalyses 5-methyltetrahydropteroyltri-L-glutamate + L-homocysteine = tetrahydropteroyltri-L-glutamate + L-methionine. The protein operates within amino-acid biosynthesis; L-methionine biosynthesis via de novo pathway; L-methionine from L-homocysteine (MetE route): step 1/1. Its function is as follows. Catalyzes the transfer of a methyl group from 5-methyltetrahydrofolate to homocysteine resulting in methionine formation. In Streptomyces coelicolor (strain ATCC BAA-471 / A3(2) / M145), this protein is 5-methyltetrahydropteroyltriglutamate--homocysteine methyltransferase.